The chain runs to 468 residues: Glutamate--tRNA ligase (468 aa).

The 'HIGH' region signature appears at 8 to 18 (PSPTGFLHVGG). The Zn(2+) site is built by Cys97, Cys99, Cys124, and Asp126. A 'KMSKS' region motif is present at residues 236–240 (KLSKR). Lys239 provides a ligand contact to ATP.

The protein belongs to the class-I aminoacyl-tRNA synthetase family. Glutamate--tRNA ligase type 1 subfamily. Monomer. It depends on Zn(2+) as a cofactor.

It localises to the cytoplasm. The catalysed reaction is tRNA(Glu) + L-glutamate + ATP = L-glutamyl-tRNA(Glu) + AMP + diphosphate. In terms of biological role, catalyzes the attachment of glutamate to tRNA(Glu) in a two-step reaction: glutamate is first activated by ATP to form Glu-AMP and then transferred to the acceptor end of tRNA(Glu). This Francisella tularensis subsp. tularensis (strain SCHU S4 / Schu 4) protein is Glutamate--tRNA ligase.